Here is a 460-residue protein sequence, read N- to C-terminus: Ammonium transporter Rh type C (460 aa).

The Cytoplasmic portion of the chain corresponds to 1–9 (MVWNTNLRW). Residues 10 to 30 (RLPVTCLLLQVALVVLFGVFV) traverse the membrane as a helical segment. Residues 31-61 (RYDMDADPHWIDKKEAENSTSDMENEFYYRY) are Extracellular-facing. Asn48 is a glycosylation site (N-linked (GlcNAc...) asparagine). Residues 62-82 (PSFQDVHVMIFVGFGFLMTFL) traverse the membrane as a helical segment. Over 83–90 (QRYGYSSV) the chain is Cytoplasmic. Residues 91-111 (GFNFLLAAFGIQWALLLQGWF) form a helical membrane-spanning segment. Topologically, residues 112-125 (HSYYRGYIRVGVEN) are extracellular. A helical transmembrane segment spans residues 126-145 (LINADFCVGSVCVAFGAVLG). Over 146–151 (KVSPVQ) the chain is Cytoplasmic. Residues 152 to 174 (LLIMTLFQVTLFSVNEFILLNLL) traverse the membrane as a helical segment. The Extracellular portion of the chain corresponds to 175-179 (EVKDA). Residues 180-200 (GGSMTIHTFGAYFGLTVTWIL) traverse the membrane as a helical segment. The Cytoplasmic portion of the chain corresponds to 201–219 (YRPGLHQSKERQSSVYHSD). A helical membrane pass occupies residues 220–240 (LFAMIGTLFLWMYWPSFNSAV). At 241–251 (SNHGDAQHRAA) the chain is on the extracellular side. A helical membrane pass occupies residues 252-272 (INTYCSLAACVLTSVALSSAL). Residues 273–285 (HKKGKLDMVHIQN) lie on the Cytoplasmic side of the membrane. The helical transmembrane segment at 286 to 306 (ATLAGGVAVGTAAEMMLMPYG) threads the bilayer. Residue Ser307 is a topological domain, extracellular. The helical transmembrane segment at 308–328 (LIVGFICGIVSTLGFVYLTPF) threads the bilayer. The Cytoplasmic portion of the chain corresponds to 329 to 339 (LESRLRVQDTC). Residues 340 to 360 (GIHNLHGIPGIIGAIVGAVTA) form a helical membrane-spanning segment. The Extracellular portion of the chain corresponds to 361–396 (SCANTDVYGVNGLTQAFGFDGFKTNRTPSMQGKFQA). Residues 397 to 417 (AGLFVSLAMALVGGIIVGIIL) traverse the membrane as a helical segment. Over 418 to 460 (KLPFWGQPADENCFEDAIYWEMPEEPKSTVLHPEDSTLKPSEP) the chain is Cytoplasmic.

It belongs to the ammonium transporter (TC 2.A.49) family. Rh subfamily. As to quaternary structure, homotrimer. In terms of processing, N-glycosylated.

Its subcellular location is the apical cell membrane. The enzyme catalyses NH4(+)(in) = NH4(+)(out). It carries out the reaction methylamine(out) = methylamine(in). It catalyses the reaction CO2(out) = CO2(in). Its function is as follows. Ammonium transporter involved in the maintenance of acid-base homeostasis. Transports ammonium and its related derivative methylammonium across the plasma membrane of epithelial cells likely contributing to renal transepithelial ammonia transport and ammonia metabolism. Postulated to primarily mediate an electroneutral bidirectional transport of NH3 ammonia species according to a mechanism that implies interaction of an NH4(+) ion with acidic residues of the pore entry followed by dissociation of NH4(+) into NH3 and H(+). As a result NH3 transits through the central pore and is protonated on the extracellular side reforming NH4(+). May act as a CO2 channel providing for renal acid secretion. This is Ammonium transporter Rh type C (RHCG) from Canis lupus familiaris (Dog).